Reading from the N-terminus, the 381-residue chain is Heterogeneous nuclear rnp K-like protein 2 (381 aa).

The disordered stretch occupies residues 1 to 34 (MSQFFEAATPVAIPTNNTNGGSSDAGSAATGGAP). A compositionally biased stretch (low complexity) spans 15-33 (TNNTNGGSSDAGSAATGGA). KH domains lie at 43 to 107 (TINH…IGDI), 156 to 221 (IGYV…LIEI), and 258 to 326 (NTRI…ESML). Residues 344–381 (LEAAEGDATVVTERSDSASFLEEKEEPQKNHDNKEEQS) form a disordered region. Phosphoserine is present on residues S358, S360, and S362. Positions 369–381 (EPQKNHDNKEEQS) are enriched in basic and acidic residues.

This sequence belongs to the HEK2 family. Binds RNA. In terms of processing, phosphorylated by the plasma membrane-Anchored casein kinase YCK1. Phosphorylation at its C-terminus reduces its RNA-binding capacity.

The protein resides in the cytoplasm. Its subcellular location is the P-body. It is found in the nucleus. It localises to the chromosome. The protein localises to the telomere. In terms of biological role, RNA-binding protein involved in the correct localization of transcripts in the cell. RNA localization is a widespread mechanism for achieving localized protein synthesis. Required for the asymmetric localization to the daughter cell nucleus of the ASH1 transcript, coding for a specific repressor of transcription. Overexpression inhibits translation of the ASH1 transcript. Involved in the stability of transcripts, like the MTL1 mRNA. Involved in structural and functional organization of telomeric chromatin and regulates silencing at the HMR locus. This Saccharomyces cerevisiae (strain JAY291) (Baker's yeast) protein is Heterogeneous nuclear rnp K-like protein 2 (HEK2).